The sequence spans 448 residues: Probable xyloglucan 6-xylosyltransferase 1 (448 aa).

Over 1-19 the chain is Cytoplasmic; it reads MWVAERVVGERRMREIQRF. The chain crosses the membrane as a helical; Signal-anchor for type II membrane protein span at residues 20–42; it reads ARNAKLTVVCLLLTVVVLRGTVG. Topologically, residues 43-448 are lumenal; it reads AGKFGTPQQD…AFKAMKTTST (406 aa). A disordered region spans residues 71 to 113; that stretch reads HHDALSRGGGSSSSSGRAAQRDDEPDPPPRTLRDPPYTLGPKI. N-linked (GlcNAc...) asparagine glycosylation occurs at N421.

This sequence belongs to the glycosyltransferase 34 family.

Its subcellular location is the golgi apparatus membrane. It carries out the reaction Transfers an alpha-D-xylosyl residue from UDP-D-xylose to a glucose residue in xyloglucan, forming an alpha-(1-&gt;6)-D-xylosyl-D-glucose linkage.. Probable xyloglucan xylosyltransferase involved in the biosynthesis of xyloglucan in roots. The polypeptide is Probable xyloglucan 6-xylosyltransferase 1 (Oryza sativa subsp. indica (Rice)).